We begin with the raw amino-acid sequence, 171 residues long: Endoribonuclease YbeY (171 aa).

Residues histidine 130, histidine 134, and histidine 140 each coordinate Zn(2+).

Belongs to the endoribonuclease YbeY family. It depends on Zn(2+) as a cofactor.

The protein resides in the cytoplasm. Its function is as follows. Single strand-specific metallo-endoribonuclease involved in late-stage 70S ribosome quality control and in maturation of the 3' terminus of the 16S rRNA. The sequence is that of Endoribonuclease YbeY from Neisseria gonorrhoeae (strain ATCC 700825 / FA 1090).